Consider the following 149-residue polypeptide: Oligosaccharyltransferase complex subunit OSTC (149 aa).

Over 1 to 32 (METLYRVPFLVLECPNLKLKKPPWLHMPSAMT) the chain is Cytoplasmic. A helical transmembrane segment spans residues 33–53 (VYALVVVSYFLITGGIIYDVI). Residues 54 to 83 (VEPPSVGSMTDEHGHQRPVAFLAYRVNGQY) are Extracellular-facing. Residues 84 to 104 (IMEGLASSFLFTMGGLGFIIL) traverse the membrane as a helical segment. Residues 105–117 (DRSNAPNIPKLNR) are Cytoplasmic-facing. A helical transmembrane segment spans residues 118-138 (FLLLFIGFVCVLLSFFMARVF). Over 139 to 149 (MRMKLPGYLMG) the chain is Extracellular.

Belongs to the OSTC family. Component of STT3A-containing oligosaccharyl transferase (OST-A) complex. STT3A-containing complex assembly occurs through the formation of 3 subcomplexes. Subcomplex 1 contains RPN1 and TMEM258, subcomplex 2 contains the STT3A-specific subunits STT3A, DC2/OSTC, and KCP2 as well as the core subunit OST4, and subcomplex 3 contains RPN2, DAD1, and OST48. The OST-A complex can form stable complexes with the Sec61 complex or with both the Sec61 and TRAP complexes. Interacts with PSEN1 and NCSTN; indicative for an association with the gamma-secretase complex.

It localises to the endoplasmic reticulum. It is found in the membrane. It functions in the pathway protein modification; protein glycosylation. Subunit of STT3A-containing oligosaccharyl transferase (OST-A) complex that catalyzes the initial transfer of a defined glycan (Glc(3)Man(9)GlcNAc(2) in eukaryotes) from the lipid carrier dolichol-pyrophosphate to an asparagine residue within an Asn-X-Ser/Thr consensus motif in nascent polypeptide chains, the first step in protein N-glycosylation. N-glycosylation occurs cotranslationally and the complex associates with the Sec61 complex at the channel-forming translocon complex that mediates protein translocation across the endoplasmic reticulum (ER). Within the OST-A complex, acts as an adapter that anchors the OST-A complex to the Sec61 complex. May be involved in N-glycosylation of APP (amyloid-beta precursor protein). Can modulate gamma-secretase cleavage of APP by enhancing endoprotelysis of PSEN1. In Homo sapiens (Human), this protein is Oligosaccharyltransferase complex subunit OSTC.